Consider the following 122-residue polypeptide: MGRLFLCLVVAWCWVALLLVAPVHGRVGLPGEFSGDQRPVPATSFDLVTEPKTKQPRGVKGTRRPSWSSWSSTASRSSPPPGRGAPSAAAAAELRSVPAGPDPMHHHGSPRRPEHARSTGRP.

The signal sequence occupies residues 1-25; the sequence is MGRLFLCLVVAWCWVALLLVAPVHG. Positions 28–122 are disordered; it reads GLPGEFSGDQ…PEHARSTGRP (95 aa). Over residues 54–63 the composition is skewed to basic residues; sequence KQPRGVKGTR. Low complexity predominate over residues 64–77; that stretch reads RPSWSSWSSTASRS. The segment covering 111–122 has biased composition (basic and acidic residues); that stretch reads RRPEHARSTGRP.

This sequence belongs to the CLV3/ESR signal peptide family.

It is found in the secreted. In terms of biological role, probable extracellular signal that regulates meristem maintenance. May function as a putative ligand for a receptor complex including FON1. Regulates the size of the floral meristem and the number of floral organs. In Oryza sativa subsp. indica (Rice), this protein is Protein FLORAL ORGAN NUMBER2 (FON2).